The sequence spans 175 residues: Protein FMP23, mitochondrial (175 aa).

The transit peptide at 1–38 directs the protein to the mitochondrion; that stretch reads MLINHLSKIRTVRHFSNIKPVLSKEVSRRVIVAPASHF.

It localises to the mitochondrion. In terms of biological role, may be involved in mitochondrial iron or copper homeostatis. This Saccharomyces cerevisiae (strain ATCC 204508 / S288c) (Baker's yeast) protein is Protein FMP23, mitochondrial (FMP23).